Here is a 476-residue protein sequence, read N- to C-terminus: MTRPRTLYEKIWDAHVVERRGDGTCLIFIDRHLVHEVTSPQAFAGLRASGRTVRRPDLTLAVPDHNVPTTPRKDAAGNRLPIADPESAAQLAALEKNAPEFGIRYIDAIAPEQGIVHVVGPEQGFSLPGATIVCGDSHTACHGGIGALAFGIGTSEVEHVLATQTLLLQPAKTMEVRVEGDVGPGVSAKDIILHITGTIGAAGGTGHVIEYTGSAIRALSIEGRLTISNMAIEGGARAGLIAPDETTFAYLKGRPYAPKGADWDAAVAYWKSLTTDPGATYDKVVVIDAADIAPSVTWGTSPEDVVPITGTVPDPASFSDPSKRAAAAKSLAYMGLEPGTRMQDVPVENIFIGSCTNSRIEDLRAAAAVLKGRRKAPGVKWAIVVPGSGLVKAQAEAEGLDRIFIDAGLEWREPGCSACLAMNPDKVPAGERCASTSNRNFVGRQGPGARTHLVSPAMAAAAAVTGKLTDVRELMA.

[4Fe-4S] cluster contacts are provided by cysteine 355, cysteine 416, and cysteine 419.

Belongs to the aconitase/IPM isomerase family. LeuC type 1 subfamily. Heterodimer of LeuC and LeuD. Requires [4Fe-4S] cluster as cofactor.

It catalyses the reaction (2R,3S)-3-isopropylmalate = (2S)-2-isopropylmalate. The protein operates within amino-acid biosynthesis; L-leucine biosynthesis; L-leucine from 3-methyl-2-oxobutanoate: step 2/4. Its function is as follows. Catalyzes the isomerization between 2-isopropylmalate and 3-isopropylmalate, via the formation of 2-isopropylmaleate. The sequence is that of 3-isopropylmalate dehydratase large subunit from Sphingopyxis alaskensis (strain DSM 13593 / LMG 18877 / RB2256) (Sphingomonas alaskensis).